Here is a 179-residue protein sequence, read N- to C-terminus: Tetratricopeptide repeat protein 36 (179 aa).

TPR repeat units lie at residues 43-76 (SLQL…CPKN), 78-110 (SAYN…AGPK), and 115-148 (CQAY…GSSF).

This sequence belongs to the TTC36 family.

This Caenorhabditis elegans protein is Tetratricopeptide repeat protein 36.